We begin with the raw amino-acid sequence, 291 residues long: Phosphatidylglycerol--prolipoprotein diacylglyceryl transferase (291 aa).

Helical transmembrane passes span 21-41 (VSLH…MWLA), 60-80 (LLYA…VLFY), 96-116 (WDGG…MIWF), 130-150 (FIAP…FING), 198-218 (SQLY…NLFI), 225-245 (GAVS…VEFF), and 260-280 (ISMG…MMIW). R143 is an a 1,2-diacyl-sn-glycero-3-phospho-(1'-sn-glycerol) binding site.

It belongs to the Lgt family.

It is found in the cell inner membrane. The catalysed reaction is L-cysteinyl-[prolipoprotein] + a 1,2-diacyl-sn-glycero-3-phospho-(1'-sn-glycerol) = an S-1,2-diacyl-sn-glyceryl-L-cysteinyl-[prolipoprotein] + sn-glycerol 1-phosphate + H(+). It participates in protein modification; lipoprotein biosynthesis (diacylglyceryl transfer). In terms of biological role, catalyzes the transfer of the diacylglyceryl group from phosphatidylglycerol to the sulfhydryl group of the N-terminal cysteine of a prolipoprotein, the first step in the formation of mature lipoproteins. The protein is Phosphatidylglycerol--prolipoprotein diacylglyceryl transferase of Cronobacter sakazakii (strain ATCC BAA-894) (Enterobacter sakazakii).